We begin with the raw amino-acid sequence, 68 residues long: Large ribosomal subunit protein uL29 (68 aa).

This sequence belongs to the universal ribosomal protein uL29 family.

The chain is Large ribosomal subunit protein uL29 from Streptococcus thermophilus (strain ATCC BAA-250 / LMG 18311).